We begin with the raw amino-acid sequence, 151 residues long: U1 small nuclear ribonucleoprotein C (151 aa).

Residues 4–36 form a Matrin-type zinc finger; sequence YYCDYCDTYLTHDSPSVRKTHCTGRKHKDNVKF.

Belongs to the U1 small nuclear ribonucleoprotein C family. As to quaternary structure, U1 snRNP is composed of the 7 core Sm proteins B/B', D1, D2, D3, E, F and G that assemble in a heptameric protein ring on the Sm site of the small nuclear RNA to form the core snRNP, and at least 3 U1 snRNP-specific proteins U1-70K, U1-A and U1-C. U1-C interacts with U1 snRNA and the 5' splice-site region of the pre-mRNA.

It is found in the nucleus. Component of the spliceosomal U1 snRNP, which is essential for recognition of the pre-mRNA 5' splice-site and the subsequent assembly of the spliceosome. U1-C is directly involved in initial 5' splice-site recognition for both constitutive and regulated alternative splicing. The interaction with the 5' splice-site seems to precede base-pairing between the pre-mRNA and the U1 snRNA. Stimulates commitment or early (E) complex formation by stabilizing the base pairing of the 5' end of the U1 snRNA and the 5' splice-site region. The polypeptide is U1 small nuclear ribonucleoprotein C (Anopheles darlingi (Mosquito)).